The sequence spans 364 residues: UDP-N-acetylglucosamine--N-acetylmuramyl-(pentapeptide) pyrophosphoryl-undecaprenol N-acetylglucosamine transferase (364 aa).

Residues Thr-10 to Gly-12, Asn-128, Arg-170, Ser-199, Ile-250, and Gln-295 contribute to the UDP-N-acetyl-alpha-D-glucosamine site.

It belongs to the glycosyltransferase 28 family. MurG subfamily.

The protein resides in the cell inner membrane. The catalysed reaction is di-trans,octa-cis-undecaprenyl diphospho-N-acetyl-alpha-D-muramoyl-L-alanyl-D-glutamyl-meso-2,6-diaminopimeloyl-D-alanyl-D-alanine + UDP-N-acetyl-alpha-D-glucosamine = di-trans,octa-cis-undecaprenyl diphospho-[N-acetyl-alpha-D-glucosaminyl-(1-&gt;4)]-N-acetyl-alpha-D-muramoyl-L-alanyl-D-glutamyl-meso-2,6-diaminopimeloyl-D-alanyl-D-alanine + UDP + H(+). Its pathway is cell wall biogenesis; peptidoglycan biosynthesis. Functionally, cell wall formation. Catalyzes the transfer of a GlcNAc subunit on undecaprenyl-pyrophosphoryl-MurNAc-pentapeptide (lipid intermediate I) to form undecaprenyl-pyrophosphoryl-MurNAc-(pentapeptide)GlcNAc (lipid intermediate II). The polypeptide is UDP-N-acetylglucosamine--N-acetylmuramyl-(pentapeptide) pyrophosphoryl-undecaprenol N-acetylglucosamine transferase (Chlorobaculum parvum (strain DSM 263 / NCIMB 8327) (Chlorobium vibrioforme subsp. thiosulfatophilum)).